Here is a 486-residue protein sequence, read N- to C-terminus: Cardiolipin synthase A (486 aa).

2 helical membrane passes run Thr-3–Val-23 and Met-38–Val-58. 2 PLD phosphodiesterase domains span residues Met-219–Arg-246 and Glu-399–Ser-426. Residues His-224, Lys-226, Asp-231, His-404, Lys-406, and Asp-411 contribute to the active site.

It belongs to the phospholipase D family. Cardiolipin synthase subfamily. ClsA sub-subfamily.

The protein localises to the cell inner membrane. The catalysed reaction is 2 a 1,2-diacyl-sn-glycero-3-phospho-(1'-sn-glycerol) = a cardiolipin + glycerol. Catalyzes the reversible phosphatidyl group transfer from one phosphatidylglycerol molecule to another to form cardiolipin (CL) (diphosphatidylglycerol) and glycerol. This chain is Cardiolipin synthase A, found in Escherichia coli O157:H7 (strain EC4115 / EHEC).